Consider the following 256-residue polypeptide: tRNA (guanine-N(7)-)-methyltransferase (256 aa).

The segment at 17–45 (TCETVPGLPQKKHYRQRAHSNPHSDHDIE) is disordered. The span at 26 to 36 (QKKHYRQRAHS) shows a compositional bias: basic residues. Residues Gly-74, 97–98 (EI), 132–133 (NA), and Leu-152 each bind S-adenosyl-L-methionine. The active site involves Asp-155. 230–232 (TEE) serves as a coordination point for S-adenosyl-L-methionine.

It belongs to the class I-like SAM-binding methyltransferase superfamily. TrmB family.

It localises to the nucleus. The catalysed reaction is guanosine(46) in tRNA + S-adenosyl-L-methionine = N(7)-methylguanosine(46) in tRNA + S-adenosyl-L-homocysteine. It functions in the pathway tRNA modification; N(7)-methylguanine-tRNA biosynthesis. Its function is as follows. Catalyzes the formation of N(7)-methylguanine at position 46 (m7G46) in tRNA. This Caenorhabditis elegans protein is tRNA (guanine-N(7)-)-methyltransferase.